The sequence spans 114 residues: MICOS complex subunit MIC12 (114 aa).

Residues 4 to 26 (IAKLGSFTLVSGVVATSCYYYFI) form a helical membrane-spanning segment.

The protein belongs to the MICOS complex subunit Mic12 family. Component of the mitochondrial contact site and cristae organizing system (MICOS) complex.

It is found in the mitochondrion inner membrane. Functionally, component of the MICOS complex, a large protein complex of the mitochondrial inner membrane that plays crucial roles in the maintenance of crista junctions, inner membrane architecture, and formation of contact sites to the outer membrane. In Candida glabrata (strain ATCC 2001 / BCRC 20586 / JCM 3761 / NBRC 0622 / NRRL Y-65 / CBS 138) (Yeast), this protein is MICOS complex subunit MIC12 (AIM5).